The chain runs to 349 residues: 4-hydroxy-3-methylbut-2-enyl diphosphate reductase (349 aa).

Cys18 is a [4Fe-4S] cluster binding site. His47 and His83 together coordinate (2E)-4-hydroxy-3-methylbut-2-enyl diphosphate. Dimethylallyl diphosphate-binding residues include His47 and His83. 2 residues coordinate isopentenyl diphosphate: His47 and His83. Cys105 is a binding site for [4Fe-4S] cluster. His133 provides a ligand contact to (2E)-4-hydroxy-3-methylbut-2-enyl diphosphate. Position 133 (His133) interacts with dimethylallyl diphosphate. His133 serves as a coordination point for isopentenyl diphosphate. Catalysis depends on Glu135, which acts as the Proton donor. Residue Thr174 participates in (2E)-4-hydroxy-3-methylbut-2-enyl diphosphate binding. Cys204 provides a ligand contact to [4Fe-4S] cluster. Ser232, Ser233, Asn234, and Ser277 together coordinate (2E)-4-hydroxy-3-methylbut-2-enyl diphosphate. Residues Ser232, Ser233, Asn234, and Ser277 each contribute to the dimethylallyl diphosphate site. Residues Ser232, Ser233, Asn234, and Ser277 each contribute to the isopentenyl diphosphate site.

This sequence belongs to the IspH family. Requires [4Fe-4S] cluster as cofactor.

It catalyses the reaction isopentenyl diphosphate + 2 oxidized [2Fe-2S]-[ferredoxin] + H2O = (2E)-4-hydroxy-3-methylbut-2-enyl diphosphate + 2 reduced [2Fe-2S]-[ferredoxin] + 2 H(+). It carries out the reaction dimethylallyl diphosphate + 2 oxidized [2Fe-2S]-[ferredoxin] + H2O = (2E)-4-hydroxy-3-methylbut-2-enyl diphosphate + 2 reduced [2Fe-2S]-[ferredoxin] + 2 H(+). It participates in isoprenoid biosynthesis; dimethylallyl diphosphate biosynthesis; dimethylallyl diphosphate from (2E)-4-hydroxy-3-methylbutenyl diphosphate: step 1/1. Its pathway is isoprenoid biosynthesis; isopentenyl diphosphate biosynthesis via DXP pathway; isopentenyl diphosphate from 1-deoxy-D-xylulose 5-phosphate: step 6/6. Catalyzes the conversion of 1-hydroxy-2-methyl-2-(E)-butenyl 4-diphosphate (HMBPP) into a mixture of isopentenyl diphosphate (IPP) and dimethylallyl diphosphate (DMAPP). Acts in the terminal step of the DOXP/MEP pathway for isoprenoid precursor biosynthesis. The polypeptide is 4-hydroxy-3-methylbut-2-enyl diphosphate reductase (Bartonella bacilliformis (strain ATCC 35685 / KC583 / Herrer 020/F12,63)).